A 186-amino-acid chain; its full sequence is Large ribosomal subunit protein uL16 (186 aa).

The protein belongs to the universal ribosomal protein uL16 family.

The chain is Large ribosomal subunit protein uL16 from Nanoarchaeum equitans (strain Kin4-M).